The following is a 347-amino-acid chain: Quinolinate synthase (347 aa).

Residues H47 and S68 each contribute to the iminosuccinate site. C113 provides a ligand contact to [4Fe-4S] cluster. Iminosuccinate is bound by residues 139-141 (YAN) and S156. C200 contributes to the [4Fe-4S] cluster binding site. Iminosuccinate contacts are provided by residues 226–228 (HPE) and T243. A [4Fe-4S] cluster-binding site is contributed by C297.

This sequence belongs to the quinolinate synthase family. Type 1 subfamily. It depends on [4Fe-4S] cluster as a cofactor.

The protein resides in the cytoplasm. The catalysed reaction is iminosuccinate + dihydroxyacetone phosphate = quinolinate + phosphate + 2 H2O + H(+). The protein operates within cofactor biosynthesis; NAD(+) biosynthesis; quinolinate from iminoaspartate: step 1/1. Catalyzes the condensation of iminoaspartate with dihydroxyacetone phosphate to form quinolinate. In Escherichia coli O9:H4 (strain HS), this protein is Quinolinate synthase.